Here is a 474-residue protein sequence, read N- to C-terminus: MAYSATQTKKGYQAGVKDYRLTYYTPDYTPKDTDVLACFRVTPQPGVPPEEAGAAVAAESSTGTWTTVWTDLLTDLDRYKGRCYDIEPVPGEENQYFCFVAYPLDLFEEGSVTNMLTSIVGNVFGFKALKALRLEDVRIPVAYLKTFQGPPHGIQVERDKLNKYGRPLLGCTIKPKLGLSAKNYGRAVYEALRGGLDFTKDDENINSQPFQRWRDRYLFVMEAVHKAQAETGEIKGHYLNVTAPTCEEMFKRAEFAKEIGAPIIMHDYLTAGFTANTSLAKWCRDNGILLHIHRAMHAVIDRQKNHGIHFRVLAKCLRMSGGDHLHAGTVVGKLEGDRAITMGFVDLMRENYVEADRSRGIFFTQDWASMPGVMPVASGGIHVWHMPALVEIFGDDAVLQFGGGTLGHPWGNAPGATANRVALEACIQARNEGRDLAREGNEIIREAAKWSPELAAACELWKEIKFEFKPVDTL.

Substrate is bound by residues N122 and T172. Residue K174 is the Proton acceptor of the active site. Substrate is bound at residue K176. Residues K200, D202, and E203 each coordinate Mg(2+). K200 carries the N6-carboxylysine modification. H293 acts as the Proton acceptor in catalysis. 3 residues coordinate substrate: R294, H326, and S378.

Belongs to the RuBisCO large chain family. Type I subfamily. Heterohexadecamer of 8 large chains and 8 small chains; disulfide-linked. The disulfide link is formed within the large subunit homodimers. Mg(2+) serves as cofactor. Post-translationally, the disulfide bond which can form in the large chain dimeric partners within the hexadecamer appears to be associated with oxidative stress and protein turnover.

Its subcellular location is the carboxysome. It carries out the reaction 2 (2R)-3-phosphoglycerate + 2 H(+) = D-ribulose 1,5-bisphosphate + CO2 + H2O. The catalysed reaction is D-ribulose 1,5-bisphosphate + O2 = 2-phosphoglycolate + (2R)-3-phosphoglycerate + 2 H(+). RuBisCO catalyzes two reactions: the carboxylation of D-ribulose 1,5-bisphosphate, the primary event in carbon dioxide fixation, as well as the oxidative fragmentation of the pentose substrate in the photorespiration process. Both reactions occur simultaneously and in competition at the same active site. The polypeptide is Ribulose bisphosphate carboxylase large chain (Synechococcus sp. (strain JA-3-3Ab) (Cyanobacteria bacterium Yellowstone A-Prime)).